The sequence spans 212 residues: Anaphase-promoting complex subunit 10 (212 aa).

The 185-residue stretch at 12–196 (MDEEERTSSR…PSAVLEARPG (185 aa)) folds into the DOC domain.

The protein belongs to the APC10 family. As to quaternary structure, the APC/C complex is probably composed of at least 12 subunits: apc-2, apc-10, apc-11, cdc-26, emb-1, emb-27, emb-30, mat-1, mat-2, mat-3, such-1 and gfi-3.

Its pathway is protein modification; protein ubiquitination. Its function is as follows. Probable component of the anaphase promoting complex/cyclosome (APC/C), a cell cycle-regulated E3 ubiquitin ligase that controls progression through mitosis and the G1 phase of the cell cycle. The APC/C complex acts by mediating ubiquitination and subsequent degradation of target proteins. In Caenorhabditis elegans, this protein is Anaphase-promoting complex subunit 10.